The primary structure comprises 216 residues: Thymidylate kinase (216 aa).

Residue 10 to 17 participates in ATP binding; sequence GIDGCGKT.

The protein belongs to the thymidylate kinase family.

It catalyses the reaction dTMP + ATP = dTDP + ADP. Phosphorylation of dTMP to form dTDP in both de novo and salvage pathways of dTTP synthesis. In Prochlorococcus marinus (strain MIT 9303), this protein is Thymidylate kinase.